A 309-amino-acid polypeptide reads, in one-letter code: Hydroxyacylglutathione hydrolase, mitochondrial (309 aa).

A mitochondrion-targeting transit peptide spans M1–G24. K90 is modified (N6-acetyllysine). 4 residues coordinate Zn(2+): H103, H105, D107, and H108. N6-acetyllysine is present on K117. 2 residues coordinate Zn(2+): H159 and D183. Residues K192–Y194 and H222–Y224 contribute to the substrate site. H222 contributes to the Zn(2+) binding site. Residue K230 is modified to N6-acetyllysine; alternate. K230 carries the N6-succinyllysine; alternate modification. Residue R298–K301 coordinates substrate.

Belongs to the metallo-beta-lactamase superfamily. Glyoxalase II family. As to quaternary structure, monomer. Zn(2+) is required as a cofactor. In terms of tissue distribution, strongly expressed in testis, skeletal muscle and heart. Weakly expressed in placenta, pancreas, spleen and peripheral blood leukocytes.

The protein resides in the mitochondrion matrix. It localises to the cytoplasm. It catalyses the reaction an S-(2-hydroxyacyl)glutathione + H2O = a 2-hydroxy carboxylate + glutathione + H(+). The catalysed reaction is (R)-S-lactoylglutathione + H2O = (R)-lactate + glutathione + H(+). Its pathway is secondary metabolite metabolism; methylglyoxal degradation; (R)-lactate from methylglyoxal: step 2/2. In terms of biological role, thiolesterase that catalyzes the hydrolysis of S-D-lactoyl-glutathione to form glutathione and D-lactic acid. The protein is Hydroxyacylglutathione hydrolase, mitochondrial (Hagh) of Rattus norvegicus (Rat).